The chain runs to 353 residues: MSTLLLNLDFGEPPPKKALEGNAKHRNFVKKRRLLERRGFLSKKNQPPSKAPKLHSEPSKKGETPTVDGTWKTPSFPKKKTAASSNGSGQPLDKKAAVSWLTPAPSKKADSVAAKVDLLGEFQSALPKINSHPTRSQKKSSQKKSSKKNHPQKNAPQNSTQAHSENKCSGASQKLPRKMVAIDCEMVGTGPKGHVSSLARCSIVNYNGDVLYDEYILPPCHIVDYRTRWSGIRKQHMVNATPFKIARGQILKILTGKIVVGHAIHNDFKALQYFHPKSLTRDTSHIPPLNRKADCPENATMSLKHLTKKLLNRDIQVGKSGHSSVEDAQATMELYKLVEVEWEEHLARNPPTD.

Disordered regions lie at residues 1–93 (MSTL…QPLD) and 125–172 (ALPK…SGAS). Basic and acidic residues predominate over residues 14-23 (PPKKALEGNA). A compositionally biased stretch (basic residues) spans 24–35 (KHRNFVKKRRLL). Positions 54-63 (LHSEPSKKGE) are enriched in basic and acidic residues. The segment covering 135-151 (RSQKKSSQKKSSKKNHP) has biased composition (basic residues). Polar residues predominate over residues 152–172 (QKNAPQNSTQAHSENKCSGAS). An Exonuclease domain is found at 178–353 (KMVAIDCEMV…EHLARNPPTD (176 aa)).

The protein localises to the nucleus. It localises to the nucleolus. In terms of biological role, 3'-&gt; 5'-exoribonuclease involved in ribosome biogenesis in the processing of the 12S pre-rRNA. Displays a strong specificity for a 3'-end containing a free hydroxyl group. In Homo sapiens (Human), this protein is Interferon-stimulated 20 kDa exonuclease-like 2 (ISG20L2).